The sequence spans 158 residues: Serine-protein kinase RsbW (158 aa).

This sequence belongs to the anti-sigma-factor family.

The enzyme catalyses L-seryl-[protein] + ATP = O-phospho-L-seryl-[protein] + ADP + H(+). It carries out the reaction L-threonyl-[protein] + ATP = O-phospho-L-threonyl-[protein] + ADP + H(+). Negative regulator of sigma-B activity. Phosphorylates and inactivates its specific antagonist protein, RsbV. Upon phosphorylation of RsbV, RsbW is released and binds to sigma-B, thereby blocking its ability to form an RNA polymerase holoenzyme (E-sigma-B). In Oceanobacillus iheyensis (strain DSM 14371 / CIP 107618 / JCM 11309 / KCTC 3954 / HTE831), this protein is Serine-protein kinase RsbW.